Consider the following 293-residue polypeptide: Kynurenine formamidase (293 aa).

The short motif at 84–88 (HGGYW) is the HGGXW element. Residue Ser-153 is the Nucleophile of the active site. Catalysis depends on residues Asp-236 and His-268.

Belongs to the kynurenine formamidase family. As to quaternary structure, homodimer.

The protein resides in the cytoplasm. Its subcellular location is the cytosol. It is found in the nucleus. The catalysed reaction is N-formyl-L-kynurenine + H2O = L-kynurenine + formate + H(+). It functions in the pathway amino-acid degradation; L-tryptophan degradation via kynurenine pathway; L-kynurenine from L-tryptophan: step 2/2. In terms of biological role, catalyzes the hydrolysis of N-formyl-L-kynurenine to L-kynurenine, the second step in the kynurenine pathway of tryptophan degradation. Kynurenine may be further oxidized to nicotinic acid, NAD(H) and NADP(H). Required for elimination of toxic metabolites. This chain is Kynurenine formamidase (afmid), found in Danio rerio (Zebrafish).